Consider the following 311-residue polypeptide: Methionyl-tRNA formyltransferase (311 aa).

Ser108–Pro111 is a (6S)-5,6,7,8-tetrahydrofolate binding site.

It belongs to the Fmt family.

It carries out the reaction L-methionyl-tRNA(fMet) + (6R)-10-formyltetrahydrofolate = N-formyl-L-methionyl-tRNA(fMet) + (6S)-5,6,7,8-tetrahydrofolate + H(+). Its function is as follows. Attaches a formyl group to the free amino group of methionyl-tRNA(fMet). The formyl group appears to play a dual role in the initiator identity of N-formylmethionyl-tRNA by promoting its recognition by IF2 and preventing the misappropriation of this tRNA by the elongation apparatus. This chain is Methionyl-tRNA formyltransferase, found in Sorangium cellulosum (strain So ce56) (Polyangium cellulosum (strain So ce56)).